Reading from the N-terminus, the 486-residue chain is Keratin-3, type I cytoskeletal 51 kDa (486 aa).

The interval Met-1–Asn-125 is head. The coil 1A stretch occupies residues Glu-126–Trp-161. Positions Glu-126–Pro-442 constitute an IF rod domain. Positions Tyr-162–Met-184 are linker 1. The interval Ile-185 to Met-276 is coil 1B. Residues Gln-277–Ile-299 form a linker 12 region. The tract at residues Leu-300–Asp-438 is coil 2. Residues Leu-435–Arg-466 are disordered. The segment at Leu-439–Met-486 is tail. Residues Ser-449–Thr-461 are compositionally biased toward low complexity.

Belongs to the intermediate filament family. In terms of assembly, heterotetramer of two type I and two type II keratins.

The protein is Keratin-3, type I cytoskeletal 51 kDa of Xenopus laevis (African clawed frog).